Here is a 179-residue protein sequence, read N- to C-terminus: Large ribosomal subunit protein uL6 (179 aa).

The protein belongs to the universal ribosomal protein uL6 family. As to quaternary structure, part of the 50S ribosomal subunit.

Its function is as follows. This protein binds to the 23S rRNA, and is important in its secondary structure. It is located near the subunit interface in the base of the L7/L12 stalk, and near the tRNA binding site of the peptidyltransferase center. In Chloroherpeton thalassium (strain ATCC 35110 / GB-78), this protein is Large ribosomal subunit protein uL6.